The primary structure comprises 259 residues: Thiazole synthase (259 aa).

Lysine 95 serves as the catalytic Schiff-base intermediate with DXP. 1-deoxy-D-xylulose 5-phosphate-binding positions include glycine 156, 182–183 (AG), and 204–205 (AS).

This sequence belongs to the ThiG family. In terms of assembly, homotetramer. Forms heterodimers with either ThiH or ThiS.

The protein resides in the cytoplasm. The catalysed reaction is [ThiS sulfur-carrier protein]-C-terminal-Gly-aminoethanethioate + 2-iminoacetate + 1-deoxy-D-xylulose 5-phosphate = [ThiS sulfur-carrier protein]-C-terminal Gly-Gly + 2-[(2R,5Z)-2-carboxy-4-methylthiazol-5(2H)-ylidene]ethyl phosphate + 2 H2O + H(+). It participates in cofactor biosynthesis; thiamine diphosphate biosynthesis. Catalyzes the rearrangement of 1-deoxy-D-xylulose 5-phosphate (DXP) to produce the thiazole phosphate moiety of thiamine. Sulfur is provided by the thiocarboxylate moiety of the carrier protein ThiS. In vitro, sulfur can be provided by H(2)S. The sequence is that of Thiazole synthase from Corynebacterium aurimucosum (strain ATCC 700975 / DSM 44827 / CIP 107346 / CN-1) (Corynebacterium nigricans).